The chain runs to 462 residues: Ketoisovalerate reductase (462 aa).

Residues Pro34–Asp55 are disordered. The segment covering Lys38–Pro49 has biased composition (basic and acidic residues). Gly72 to Gly77 contacts NADP(+). A Calmoduling-binding motif is present at residues Ala167–Gln184. Lys290 serves as the catalytic Proton donor. Substrate-binding residues include Asn294, Asn298, and Ser403. NADP(+) is bound at residue Glu415.

Belongs to the ketopantoate reductase family. Homodimer. Binds to calmodulin in a calcium-independent manner.

It catalyses the reaction (R)-2-hydroxy-3-methylbutanoate + NADP(+) = 3-methyl-2-oxobutanoate + NADPH + H(+). With respect to regulation, environmental stimuli such as light and salt stress suppress activity through stimulation of calmodulin (CaM) that binds BEA2 and probably impairs its dimerization. In terms of biological role, ketoisovalerate reductase; part of the gene cluster that mediates the biosynthesis of beauvericin (BEA), a non-ribosomal cyclic hexadepsipeptide that shows antibiotic, antifungal, insecticidal, and cancer cell antiproliferative and antihaptotactic activity. Ketoisovalerate reductase BEA2 catalyzes the NADPH-specific reduction of ketoisovaleric acid to hydroxyisovalerate, a precursor for beauvericin biosynthesis. The nonribosomal cyclodepsipeptide synthetase BEA1 then catalyzes the formation of beauvericin via condensation and cyclization of 3 dipeptidol monomers, each composed of one unit of hydroxyisovalerate and one unit of N-methyl-phenylalanine. The sequence is that of Ketoisovalerate reductase from Beauveria bassiana (White muscardine disease fungus).